The sequence spans 263 residues: Leucyl/phenylalanyl-tRNA--protein transferase (263 aa).

It belongs to the L/F-transferase family.

The protein localises to the cytoplasm. The catalysed reaction is N-terminal L-lysyl-[protein] + L-leucyl-tRNA(Leu) = N-terminal L-leucyl-L-lysyl-[protein] + tRNA(Leu) + H(+). It catalyses the reaction N-terminal L-arginyl-[protein] + L-leucyl-tRNA(Leu) = N-terminal L-leucyl-L-arginyl-[protein] + tRNA(Leu) + H(+). It carries out the reaction L-phenylalanyl-tRNA(Phe) + an N-terminal L-alpha-aminoacyl-[protein] = an N-terminal L-phenylalanyl-L-alpha-aminoacyl-[protein] + tRNA(Phe). Functions in the N-end rule pathway of protein degradation where it conjugates Leu, Phe and, less efficiently, Met from aminoacyl-tRNAs to the N-termini of proteins containing an N-terminal arginine or lysine. The chain is Leucyl/phenylalanyl-tRNA--protein transferase from Novosphingobium aromaticivorans (strain ATCC 700278 / DSM 12444 / CCUG 56034 / CIP 105152 / NBRC 16084 / F199).